Here is a 243-residue protein sequence, read N- to C-terminus: UPF0758 protein SYNPCC7002_A0220 (243 aa).

Residues 112-235 (IIVDSPEAAA…FGSLRQKTAL (124 aa)) enclose the MPN domain. Positions 184, 186, and 197 each coordinate Zn(2+). The short motif at 184–197 (HNHPSGNVDPSPED) is the JAMM motif element.

Belongs to the UPF0758 family.

The polypeptide is UPF0758 protein SYNPCC7002_A0220 (Picosynechococcus sp. (strain ATCC 27264 / PCC 7002 / PR-6) (Agmenellum quadruplicatum)).